The primary structure comprises 451 residues: mRNA cleavage and polyadenylation factor CLP1 (451 aa).

ATP is bound by residues glutamate 33, lysine 72, and asparagine 133 to alanine 138.

Belongs to the Clp1 family. Clp1 subfamily. As to quaternary structure, component of a pre-mRNA cleavage factor complex. Interacts directly with PCF11.

It localises to the nucleus. In terms of biological role, required for endonucleolytic cleavage during polyadenylation-dependent pre-mRNA 3'-end formation. The sequence is that of mRNA cleavage and polyadenylation factor CLP1 from Vanderwaltozyma polyspora (strain ATCC 22028 / DSM 70294 / BCRC 21397 / CBS 2163 / NBRC 10782 / NRRL Y-8283 / UCD 57-17) (Kluyveromyces polysporus).